An 880-amino-acid chain; its full sequence is Alanine--tRNA ligase (880 aa).

Positions 414 to 443 (TVDESEFESEMEKQRNRARKARSGGDTEGW) are disordered. Positions 566, 570, 668, and 672 each coordinate Zn(2+).

The protein belongs to the class-II aminoacyl-tRNA synthetase family. Requires Zn(2+) as cofactor.

Its subcellular location is the cytoplasm. The catalysed reaction is tRNA(Ala) + L-alanine + ATP = L-alanyl-tRNA(Ala) + AMP + diphosphate. Functionally, catalyzes the attachment of alanine to tRNA(Ala) in a two-step reaction: alanine is first activated by ATP to form Ala-AMP and then transferred to the acceptor end of tRNA(Ala). Also edits incorrectly charged Ser-tRNA(Ala) and Gly-tRNA(Ala) via its editing domain. This Alkaliphilus metalliredigens (strain QYMF) protein is Alanine--tRNA ligase.